We begin with the raw amino-acid sequence, 139 residues long: Intrinsically disordered protein, expressed in pharynx 15 (139 aa).

The segment covering 1 to 12 (MNNNQGMYNTQT) has biased composition (polar residues). The interval 1 to 98 (MNNNQGMYNT…GSSTPSPQYS (98 aa)) is disordered. 2 stretches are compositionally biased toward low complexity: residues 13–41 (TQGY…QTTT) and 49–98 (QPQQ…PQYS).

In Caenorhabditis elegans, this protein is Intrinsically disordered protein, expressed in pharynx 15.